The chain runs to 356 residues: Arginine kinase Scy s 2 (356 aa).

Residues 9-91 (KLEEGFKKLE…FDPIIEDYHK (83 aa)) enclose the Phosphagen kinase N-terminal domain. 64 to 68 (GVGVY) serves as a coordination point for L-arginine. The Phosphagen kinase C-terminal domain maps to 119 to 356 (FVISTRVRCG…LELIKMEKEM (238 aa)). Residues 122–126 (STRVR) and His-185 each bind ATP. Residue Glu-225 participates in L-arginine binding. Arg-229 lines the ATP pocket. L-arginine is bound at residue Cys-271. Residues 280 to 284 (RASVH) and 309 to 314 (RGTRGE) contribute to the ATP site. Glu-314 serves as a coordination point for L-arginine.

It belongs to the ATP:guanido phosphotransferase family. As to expression, muscle (at protein level).

The catalysed reaction is L-arginine + ATP = N(omega)-phospho-L-arginine + ADP + H(+). Its function is as follows. Catalyzes the reversible transfer of high energy ATP gamma-phosphate group to L-arginine. The protein is Arginine kinase Scy s 2 of Scylla serrata (Mud crab).